We begin with the raw amino-acid sequence, 267 residues long: Interleukin-15 receptor subunit alpha (267 aa).

The N-terminal stretch at 1-30 (MAPRRARGCRTLGLPALLLLLLLRPPATRG) is a signal peptide. One can recognise a Sushi domain in the interval 31 to 95 (ITCPPPMSVE…WTTPSLKCIR (65 aa)). Topologically, residues 31-205 (ITCPPPMSVE…VYPQGHSDTT (175 aa)) are extracellular. Intrachain disulfides connect Cys33–Cys75 and Cys59–Cys93. The disordered stretch occupies residues 102-178 (QRPAPPSTVT…ESSHGTPSQT (77 aa)). Residues 108–124 (STVTTAGVTPQPESLSP) show a composition bias toward polar residues. Low complexity predominate over residues 129-145 (PAASSPSSNNTAATTAA). Residue Asn137 is glycosylated (N-linked (GlcNAc...) asparagine). Positions 152 to 165 (LMPSKSPSTGTTEI) are enriched in polar residues. The helical transmembrane segment at 206 to 228 (VAISTSTVLLCGLSAVSLLACYL) threads the bilayer. Residues 229-267 (KSRQTPPLASVEMEAMEALPVTWGTSSRDEDLENCSHHL) are Cytoplasmic-facing.

In terms of assembly, the interleukin-15 receptor IL15R is a heterotrimer of IL15RA, IL2RB and IL2RG. IL15RA also self-associates. Interacts with SYK. In terms of processing, N-glycosylated and O-glycosylated. Post-translationally, a soluble form (sIL-15RA) arises from proteolytic shedding of the membrane-anchored receptor. It also binds IL-15 and thus interferes with IL-15 binding to the membrane receptor. As to expression, expressed in neutrophils (at protein level). Expressed in fetal brain with higher expression in the hippocampus and cerebellum than in cortex and thalamus. Higher levels of soluble sIL-15RA form in comparison with membrane-bound forms is present in all brain structures. Isoforms 1, 3, 4, 5, 6, 7, 8 and 9: Widely expressed.

It is found in the membrane. The protein resides in the nucleus membrane. The protein localises to the cell surface. Its subcellular location is the endoplasmic reticulum membrane. It localises to the golgi apparatus membrane. It is found in the cytoplasmic vesicle membrane. The protein resides in the secreted. The protein localises to the extracellular space. High-affinity receptor for interleukin-15. Can signal both in cis and trans where IL15R from one subset of cells presents IL15 to neighboring IL2RG-expressing cells. In neutrophils, binds and activates kinase SYK in response to IL15 stimulation. In neutrophils, required for IL15-induced phagocytosis in a SYK-dependent manner. Expression of different isoforms may alter or interfere with signal transduction. Its function is as follows. Does not bind IL15. In Homo sapiens (Human), this protein is Interleukin-15 receptor subunit alpha (IL15RA).